Consider the following 881-residue polypeptide: Rho GTPase-activating protein 17 (881 aa).

A BAR domain is found at 14–246 (QTVGRAEKTE…MRAHQDKWAE (233 aa)). Residues 252-442 (TPLEEHLKRS…PIIQHADWFF (191 aa)) enclose the Rho-GAP domain. Residues 459–475 (TPSSNHSFHTGNDSDSG) are compositionally biased toward polar residues. The tract at residues 459-482 (TPSSNHSFHTGNDSDSGTLERKRP) is disordered. Phosphoserine occurs at positions 484 and 575. The tract at residues 511 to 881 (GGTLNRKHIS…IDNDTESTAL (371 aa)) is disordered. Polar residues predominate over residues 592-617 (RNNSQIASGQNQPQAAAGSHQLSMGQ). Residues 637–650 (APAPPKPGNPPPGH) are compositionally biased toward pro residues. The segment covering 653-664 (GQSSSGTSQHPP) has biased composition (low complexity). Residues 665-678 (SLSPKPPTRSPSPP) show a composition bias toward pro residues. Phosphothreonine is present on residues threonine 679 and threonine 682. Residues 679-698 (TQHTGQPPGQPSAPSQLSAP) are compositionally biased toward low complexity. A phosphoserine mark is found at serine 702 and serine 704. Composition is skewed to pro residues over residues 712–721 (NHPPPQPPTQ), 752–764 (HTPPQTPTPPSTP), and 806–816 (RPSVPPPPQPP). Phosphothreonine occurs at positions 753, 757, and 759. An SH3-binding motif is present at residues 753-766 (TPPQTPTPPSTPPL). Serine 762 carries the post-translational modification Phosphoserine. A Phosphothreonine modification is found at threonine 763. Positions 822–844 (GDSSLTNTAPTASKIVTDSNSRV) are enriched in polar residues. Residues 845–865 (SEPHRSIFPEMHSDSASKDVP) show a composition bias toward basic and acidic residues. Residues 872 to 881 (IDNDTESTAL) are compositionally biased toward acidic residues.

As to quaternary structure, component of a complex whose core is composed of ARHGAP17, AMOT, PALS1, PATJ and PARD3/PAR3. Interacts with NHERF1, FNBP1, TRIP10, CAPZA (CAPZA1, CAPZA2 or CAPZA3), CAPZB, CD2AP and SH3KBP1/CIN85. Ubiquitously expressed. Expressed at higher level in heart and placenta.

Its subcellular location is the membrane. The protein resides in the cytoplasm. The protein localises to the cell junction. It localises to the tight junction. Its function is as follows. Rho GTPase-activating protein involved in the maintenance of tight junction by regulating the activity of CDC42, thereby playing a central role in apical polarity of epithelial cells. Specifically acts as a GTPase activator for the CDC42 GTPase by converting it to an inactive GDP-bound state. The complex formed with AMOT acts by regulating the uptake of polarity proteins at tight junctions, possibly by deciding whether tight junction transmembrane proteins are recycled back to the plasma membrane or sent elsewhere. Participates in the Ca(2+)-dependent regulation of exocytosis, possibly by catalyzing GTPase activity of Rho family proteins and by inducing the reorganization of the cortical actin filaments. Acts as a GTPase activator in vitro for RAC1. This is Rho GTPase-activating protein 17 (ARHGAP17) from Homo sapiens (Human).